We begin with the raw amino-acid sequence, 161 residues long: MKVGIIMGSKSDWPTMKLAADMLDQFGVSYETKVVSAHRTPQLLADYASSAKERGIKVIIAGAGGAAHLPGMAAAFTSLPVLGVPVQSRALKGMDSLLSIVQMPKGIAVGTLAIGEAGAANAGILAAQILGTHDESIMAKVEAFRNEQTETVLANPNPAED.

3 residues coordinate substrate: Ser-9, Asp-12, and Arg-39.

This sequence belongs to the AIR carboxylase family. Class I subfamily.

It carries out the reaction 5-carboxyamino-1-(5-phospho-D-ribosyl)imidazole + H(+) = 5-amino-1-(5-phospho-D-ribosyl)imidazole-4-carboxylate. It functions in the pathway purine metabolism; IMP biosynthesis via de novo pathway; 5-amino-1-(5-phospho-D-ribosyl)imidazole-4-carboxylate from 5-amino-1-(5-phospho-D-ribosyl)imidazole (N5-CAIR route): step 2/2. Catalyzes the conversion of N5-carboxyaminoimidazole ribonucleotide (N5-CAIR) to 4-carboxy-5-aminoimidazole ribonucleotide (CAIR). In Vibrio parahaemolyticus serotype O3:K6 (strain RIMD 2210633), this protein is N5-carboxyaminoimidazole ribonucleotide mutase.